The following is a 709-amino-acid chain: Fatty acid oxidation complex subunit alpha (709 aa).

Residues methionine 1–proline 188 form an enoyl-CoA hydratase region. Residues arginine 308–phenylalanine 709 form a 3-hydroxyacyl-CoA dehydrogenase region.

This sequence in the N-terminal section; belongs to the enoyl-CoA hydratase/isomerase family. The protein in the central section; belongs to the 3-hydroxyacyl-CoA dehydrogenase family. In terms of assembly, heterotetramer of two alpha chains (FadJ) and two beta chains (FadI).

The protein resides in the cytoplasm. The enzyme catalyses a (3S)-3-hydroxyacyl-CoA = a (2E)-enoyl-CoA + H2O. The catalysed reaction is a 4-saturated-(3S)-3-hydroxyacyl-CoA = a (3E)-enoyl-CoA + H2O. It catalyses the reaction a (3S)-3-hydroxyacyl-CoA + NAD(+) = a 3-oxoacyl-CoA + NADH + H(+). It carries out the reaction (3S)-3-hydroxybutanoyl-CoA = (3R)-3-hydroxybutanoyl-CoA. Its pathway is lipid metabolism; fatty acid beta-oxidation. Catalyzes the formation of a hydroxyacyl-CoA by addition of water on enoyl-CoA. Also exhibits 3-hydroxyacyl-CoA epimerase and 3-hydroxyacyl-CoA dehydrogenase activities. The polypeptide is Fatty acid oxidation complex subunit alpha (Shewanella sp. (strain ANA-3)).